We begin with the raw amino-acid sequence, 359 residues long: MAKSTSKTGRIAIIGASGYGGLQLVKLINEHPNFEISTLNGERSVGKNWNEINPFMKILQDKKITKSNIDEIALDSDYAILSLPNGLSSQLTPLLLKKGVKVLDLSADYRFKSLDKWKEVYTKEAAKYKRYDYELCEEAIYGFSEEFSSEISKSRLIACPGCYPTASLSLLIPFLKQGLIESEGIIVDAKSGTSGGGRNPNEQLLLSECSESISPYGVIGHRHTAEIERIASHFAGHEVNLQFTPHLVPMVRGILSTVYARLRDPGLTAEDCKIVIEAFYKDQPFIDILPVGIYPATKWVKNTNKVMISVEVDKRNGRIVLMSVIDNLLKGQAGQAVQNLNIMHGLESDIGLPKITFYP.

The active site involves cysteine 162.

Belongs to the NAGSA dehydrogenase family. Type 1 subfamily.

The protein localises to the cytoplasm. It catalyses the reaction N-acetyl-L-glutamate 5-semialdehyde + phosphate + NADP(+) = N-acetyl-L-glutamyl 5-phosphate + NADPH + H(+). It participates in amino-acid biosynthesis; L-arginine biosynthesis; N(2)-acetyl-L-ornithine from L-glutamate: step 3/4. Catalyzes the NADPH-dependent reduction of N-acetyl-5-glutamyl phosphate to yield N-acetyl-L-glutamate 5-semialdehyde. The chain is N-acetyl-gamma-glutamyl-phosphate reductase from Prochlorococcus marinus (strain NATL1A).